We begin with the raw amino-acid sequence, 276 residues long: Pantothenate synthetase (276 aa).

27–34 contributes to the ATP binding site; sequence MGALHKGH. The Proton donor role is filled by histidine 34. Glutamine 58 serves as a coordination point for (R)-pantoate. Residue glutamine 58 coordinates beta-alanine. 147–150 contributes to the ATP binding site; that stretch reads GKKD. Residue glutamine 153 participates in (R)-pantoate binding. ATP-binding positions include valine 176 and 184–187; that span reads LSSR.

It belongs to the pantothenate synthetase family. As to quaternary structure, homodimer.

The protein localises to the cytoplasm. It carries out the reaction (R)-pantoate + beta-alanine + ATP = (R)-pantothenate + AMP + diphosphate + H(+). It functions in the pathway cofactor biosynthesis; (R)-pantothenate biosynthesis; (R)-pantothenate from (R)-pantoate and beta-alanine: step 1/1. Functionally, catalyzes the condensation of pantoate with beta-alanine in an ATP-dependent reaction via a pantoyl-adenylate intermediate. The sequence is that of Pantothenate synthetase from Helicobacter pylori (strain Shi470).